The sequence spans 895 residues: Isoleucine--tRNA ligase (895 aa).

A 'HIGH' region motif is present at residues Pro-57 to His-67. Glu-549 serves as a coordination point for L-isoleucyl-5'-AMP. Positions Lys-590–Ser-594 match the 'KMSKS' region motif. Lys-593 provides a ligand contact to ATP. Zn(2+) is bound by residues Cys-869, Cys-872, Cys-888, and Cys-891.

Belongs to the class-I aminoacyl-tRNA synthetase family. IleS type 1 subfamily. Monomer. It depends on Zn(2+) as a cofactor.

It localises to the cytoplasm. The enzyme catalyses tRNA(Ile) + L-isoleucine + ATP = L-isoleucyl-tRNA(Ile) + AMP + diphosphate. Functionally, catalyzes the attachment of isoleucine to tRNA(Ile). As IleRS can inadvertently accommodate and process structurally similar amino acids such as valine, to avoid such errors it has two additional distinct tRNA(Ile)-dependent editing activities. One activity is designated as 'pretransfer' editing and involves the hydrolysis of activated Val-AMP. The other activity is designated 'posttransfer' editing and involves deacylation of mischarged Val-tRNA(Ile). This Mycoplasma genitalium (strain ATCC 33530 / DSM 19775 / NCTC 10195 / G37) (Mycoplasmoides genitalium) protein is Isoleucine--tRNA ligase.